Consider the following 157-residue polypeptide: Ribonuclease H (157 aa).

Residues 1–142 enclose the RNase H type-1 domain; it reads MKKKIKIFID…CDFLAKISAK (142 aa). The Mg(2+) site is built by Asp-10, Glu-48, Asp-70, and Asp-134.

The protein belongs to the RNase H family. As to quaternary structure, monomer. Mg(2+) is required as a cofactor.

The protein localises to the cytoplasm. The catalysed reaction is Endonucleolytic cleavage to 5'-phosphomonoester.. Its function is as follows. Endonuclease that specifically degrades the RNA of RNA-DNA hybrids. The sequence is that of Ribonuclease H from Wigglesworthia glossinidia brevipalpis.